Consider the following 128-residue polypeptide: Large ribosomal subunit protein bL12 (128 aa).

Belongs to the bacterial ribosomal protein bL12 family. In terms of assembly, homodimer. Part of the ribosomal stalk of the 50S ribosomal subunit. Forms a multimeric L10(L12)X complex, where L10 forms an elongated spine to which 2 to 4 L12 dimers bind in a sequential fashion. Binds GTP-bound translation factors.

In terms of biological role, forms part of the ribosomal stalk which helps the ribosome interact with GTP-bound translation factors. Is thus essential for accurate translation. This is Large ribosomal subunit protein bL12 from Desulfosudis oleivorans (strain DSM 6200 / JCM 39069 / Hxd3) (Desulfococcus oleovorans).